Reading from the N-terminus, the 492-residue chain is Serine/threonine-protein kinase 3 (492 aa).

Residues 26 to 277 (FDVLEKLGEG…ATQLLQHPFI (252 aa)) enclose the Protein kinase domain. Residues 32–40 (LGEGSYGSV) and lysine 55 each bind ATP. Aspartate 145 serves as the catalytic Proton acceptor. Threonine 179 carries the post-translational modification Phosphothreonine; by autocatalysis. 2 coiled-coil regions span residues 286–328 (LRDL…TMVK) and 443–476 (NLDFEELQMRLTALDPMMEREIEELRQRYTAKRQ). A compositionally biased stretch (basic and acidic residues) spans 297-307 (KAKRQQEQQRE). The tract at residues 297 to 339 (KAKRQQEQQRELEEDDENSEEEVEVDSHTMVKSGSESAGTMRA) is disordered. Residues 308 to 320 (LEEDDENSEEEVE) are compositionally biased toward acidic residues. Polar residues predominate over residues 326–339 (MVKSGSESAGTMRA). The SARAH domain maps to 438-485 (FDFLKNLDFEELQMRLTALDPMMEREIEELRQRYTAKRQPILDAMDAK).

It belongs to the protein kinase superfamily. STE Ser/Thr protein kinase family. STE20 subfamily. In terms of assembly, homodimer; mediated via the coiled-coil region. Requires Mg(2+) as cofactor.

Its subcellular location is the cytoplasm. It is found in the nucleus. It catalyses the reaction L-seryl-[protein] + ATP = O-phospho-L-seryl-[protein] + ADP + H(+). The enzyme catalyses L-threonyl-[protein] + ATP = O-phospho-L-threonyl-[protein] + ADP + H(+). Inhibited by the C-terminal non-catalytic region. Activated by caspase-cleavage. Full activation also requires homodimerization and autophosphorylation of Thr-179. Functionally, stress-activated, pro-apoptotic kinase which, following caspase-cleavage, enters the nucleus and induces chromatin condensation followed by internucleosomal DNA fragmentation. Key component of the Hippo signaling pathway which plays a pivotal role in organ size control and tumor suppression by restricting proliferation and promoting apoptosis. The core of this pathway is composed of a kinase cascade wherein stk3/mst2 and stk4/mst1, in complex with its regulatory protein sav1, phosphorylates and activates lats1/2 in complex with its regulatory protein mob1, which in turn phosphorylates and inactivates yap1 oncoprotein and wwtr1/taz. Phosphorylation of yap1 by lats2 inhibits its translocation into the nucleus to regulate cellular genes important for cell proliferation, cell death, and cell migration. This Danio rerio (Zebrafish) protein is Serine/threonine-protein kinase 3 (stk3).